The primary structure comprises 643 residues: U3 small nucleolar RNA-associated protein 5 (643 aa).

WD repeat units lie at residues 14-54 (GQYL…LYLE), 55-98 (DSKL…VTYK), 186-225 (GHVS…TKCV), 227-266 (VAES…SSTK), 340-389 (SADR…LEQE), and 471-511 (RLKP…IHGG). A disordered region spans residues 565 to 643 (HSSEPVVEED…EAGYSDVEME (79 aa)). Residues 570–611 (VVEEDEDDVEYNEELDDAGLIEDGEESYGSEEEEEGDSDNEE) are compositionally biased toward acidic residues. Basic and acidic residues predominate over residues 612-626 (EQKHTSSKQDGRLET). The segment covering 627–643 (EQSDGEEEAGYSDVEME) has biased composition (acidic residues).

Belongs to the UTP5 family. In terms of assembly, interacts with snoRNA U3. Interacts with MPP10. Component of the ribosomal small subunit (SSU) processome composed of at least 40 protein subunits and snoRNA U3. In the absence of snoRNA3, forms a complex with other t-UTPs. This complex can associate with pre-18S ribosomal RNAs.

It is found in the nucleus. It localises to the nucleolus. In terms of biological role, involved in nucleolar processing of pre-18S ribosomal RNA. Required for optimal pre-ribosomal RNA transcription by RNA polymerase I together with a subset of U3 proteins required for transcription (t-UTPs). This Saccharomyces cerevisiae (strain ATCC 204508 / S288c) (Baker's yeast) protein is U3 small nucleolar RNA-associated protein 5 (UTP5).